Reading from the N-terminus, the 152-residue chain is UPF0756 membrane protein Helmi_09930 (152 aa).

The next 5 membrane-spanning stretches (helical) occupy residues 6 to 26 (VLLILILLLGVIARSPMTALA), 52 to 72 (TGLIMLTLAMLAPFATGKVGL), 75 to 95 (VLLSFASLPGIIAVIGGVLAT), 111 to 131 (IIVGMIVGSLLGIVLFGGIPV), and 132 to 152 (GPLMAGGLTALILQIYGWLSK).

This sequence belongs to the UPF0756 family.

The protein resides in the cell membrane. This Heliobacterium modesticaldum (strain ATCC 51547 / Ice1) protein is UPF0756 membrane protein Helmi_09930.